The chain runs to 668 residues: Ecdysone oxidase (668 aa).

FAD contacts are provided by residues 137–140, Val-270, and 536–537; these read NHMV and WH. His-537 (proton acceptor) is an active-site residue.

It belongs to the GMC oxidoreductase family. The cofactor is FAD.

The enzyme catalyses ecdysone + O2 = 3-dehydroecdysone + H2O2. In terms of biological role, involved in the inactivation of ecdysteroid molting hormones by converting ecdysteroids into 3-dehydroecdysteroids. This chain is Ecdysone oxidase, found in Bombyx mori (Silk moth).